The chain runs to 148 residues: SsrA-binding protein (148 aa).

The interval 129-148 is disordered; the sequence is ETEKDRDWQREKARLMREKA.

This sequence belongs to the SmpB family.

It is found in the cytoplasm. In terms of biological role, required for rescue of stalled ribosomes mediated by trans-translation. Binds to transfer-messenger RNA (tmRNA), required for stable association of tmRNA with ribosomes. tmRNA and SmpB together mimic tRNA shape, replacing the anticodon stem-loop with SmpB. tmRNA is encoded by the ssrA gene; the 2 termini fold to resemble tRNA(Ala) and it encodes a 'tag peptide', a short internal open reading frame. During trans-translation Ala-aminoacylated tmRNA acts like a tRNA, entering the A-site of stalled ribosomes, displacing the stalled mRNA. The ribosome then switches to translate the ORF on the tmRNA; the nascent peptide is terminated with the 'tag peptide' encoded by the tmRNA and targeted for degradation. The ribosome is freed to recommence translation, which seems to be the essential function of trans-translation. This Ralstonia nicotianae (strain ATCC BAA-1114 / GMI1000) (Ralstonia solanacearum) protein is SsrA-binding protein.